Consider the following 442-residue polypeptide: UDP-glycosyltransferase 79B8 (442 aa).

UDP-alpha-D-glucose is bound by residues S260, 319 to 321 (VQQ), 336 to 344 (HCGPGTIWE), and 358 to 361 (LGDQ).

The protein belongs to the UDP-glycosyltransferase family.

The protein is UDP-glycosyltransferase 79B8 (UGT79B8) of Arabidopsis thaliana (Mouse-ear cress).